Here is a 442-residue protein sequence, read N- to C-terminus: MKPTIVLVGRPNVGKSTLFNRLTKTRDALVADQPGLTRDRHYGVGRVGDRDYLVVDTAGFDPVAKDGIMHEMARQAEQAIAEADVLLFLVDGRAGRTPHDDQIAAHLRRAGRPVVVVVNKAEGLDRATVAADFHALGLGAPLAVSAAHGDGVKALVELVLAPFPADDEVEAAEDAGPRVAIVGRPNVGKSTLVNTLLGEERVIAFDMPGTTRDAIAIPFERGGKQYTLIDTAGLRRRGKVFEAVEKFSVIKTLQAIQEANVVVLVLDAAQDISDQDAHIAGFVLDTGRALVVAINKWDAVDDYRRARLKEDMARKLAFLSFARFHQISALRAEGIAALLKSVDGAYAAAMSNLSTPRLTRTMQAAVAKQAPPRHGSARPKLRYAHQGGMNPPVIVIHGNALDHIPNSYVRFLERTFMEAFKLQGTPLRIQFRTAHNPYATKA.

2 EngA-type G domains span residues 3–167 and 177–350; these read PTIV…PADD and PRVA…AAAM. Residues 9–16, 56–60, 119–122, 183–190, 230–234, and 295–298 contribute to the GTP site; these read GRPNVGKS, DTAGF, NKAE, DTAGL, and NKWD. One can recognise a KH-like domain in the interval 351–435; it reads SNLSTPRLTR…PLRIQFRTAH (85 aa).

This sequence belongs to the TRAFAC class TrmE-Era-EngA-EngB-Septin-like GTPase superfamily. EngA (Der) GTPase family. Associates with the 50S ribosomal subunit.

Functionally, GTPase that plays an essential role in the late steps of ribosome biogenesis. The chain is GTPase Der from Azoarcus sp. (strain BH72).